We begin with the raw amino-acid sequence, 359 residues long: Putative cyclin-F1-2 (359 aa).

The protein belongs to the cyclin family. Cyclin F subfamily.

This Oryza sativa subsp. japonica (Rice) protein is Putative cyclin-F1-2 (CYCF1-2).